The following is a 214-amino-acid chain: Outer-membrane lipoprotein LolB (214 aa).

The first 25 residues, 1–25 (MNNLKRLTKTIFSCFTLSALLLLAG), serve as a signal peptide directing secretion. Residue C26 is the site of N-palmitoyl cysteine attachment. A lipid anchor (S-diacylglycerol cysteine) is attached at C26.

This sequence belongs to the LolB family. As to quaternary structure, monomer.

The protein localises to the cell outer membrane. Plays a critical role in the incorporation of lipoproteins in the outer membrane after they are released by the LolA protein. The polypeptide is Outer-membrane lipoprotein LolB (Shewanella baltica (strain OS155 / ATCC BAA-1091)).